The following is a 274-amino-acid chain: MSENTSTATQPTPLLQDTFTVGSRTFSSRLLVGTGKYKDMTETGAAIGASAAEIVTVAIRRTNIGQNSNEPNLLDVISPDKYTILPNTAGCFDAETAIRTCKLARELLGGHNLVKLEVLGDEKTLYPNVMETLKAAKVLIDDGFEVMVYTSDDPIVAQELESMGCVAIMPLGSLIGSGLGLINRHTLSLIIENTKVPVLVDAGVGTASDAAIAMELGCDGVLMNSAIANAKNPVMMAQAMKHAVWAGRQAFLAGRMPMRKMATASSPQTGYFFQ.

K115 acts as the Schiff-base intermediate with DXP in catalysis. 1-deoxy-D-xylulose 5-phosphate contacts are provided by residues G176, A202 to G203, and N224 to S225.

It belongs to the ThiG family. In terms of assembly, homotetramer. Forms heterodimers with either ThiH or ThiS.

Its subcellular location is the cytoplasm. It carries out the reaction [ThiS sulfur-carrier protein]-C-terminal-Gly-aminoethanethioate + 2-iminoacetate + 1-deoxy-D-xylulose 5-phosphate = [ThiS sulfur-carrier protein]-C-terminal Gly-Gly + 2-[(2R,5Z)-2-carboxy-4-methylthiazol-5(2H)-ylidene]ethyl phosphate + 2 H2O + H(+). Its pathway is cofactor biosynthesis; thiamine diphosphate biosynthesis. Its function is as follows. Catalyzes the rearrangement of 1-deoxy-D-xylulose 5-phosphate (DXP) to produce the thiazole phosphate moiety of thiamine. Sulfur is provided by the thiocarboxylate moiety of the carrier protein ThiS. In vitro, sulfur can be provided by H(2)S. The sequence is that of Thiazole synthase from Psychrobacter arcticus (strain DSM 17307 / VKM B-2377 / 273-4).